The sequence spans 231 residues: 7-cyano-7-deazaguanine synthase (231 aa).

8–18 (FSGGQDSTTCL) contributes to the ATP binding site. The Zn(2+) site is built by Cys-188, Cys-197, Cys-200, and Cys-203.

The protein belongs to the QueC family. Requires Zn(2+) as cofactor.

The catalysed reaction is 7-carboxy-7-deazaguanine + NH4(+) + ATP = 7-cyano-7-deazaguanine + ADP + phosphate + H2O + H(+). It functions in the pathway purine metabolism; 7-cyano-7-deazaguanine biosynthesis. Its function is as follows. Catalyzes the ATP-dependent conversion of 7-carboxy-7-deazaguanine (CDG) to 7-cyano-7-deazaguanine (preQ(0)). The protein is 7-cyano-7-deazaguanine synthase of Citrobacter koseri (strain ATCC BAA-895 / CDC 4225-83 / SGSC4696).